Reading from the N-terminus, the 588-residue chain is Adenine deaminase (588 aa).

It belongs to the metallo-dependent hydrolases superfamily. Adenine deaminase family. As to quaternary structure, homodimer. Requires Mn(2+) as cofactor.

The catalysed reaction is adenine + H2O + H(+) = hypoxanthine + NH4(+). This Escherichia coli O157:H7 (strain EC4115 / EHEC) protein is Adenine deaminase.